Here is a 424-residue protein sequence, read N- to C-terminus: MRRVLRLLLGCFLTELCARMCRAQERSGHGQLAQLGGVLLLTGGNRSGAASGEAGEGVGGSDAPPTRAPTPDSCRGYFDVMGQWDPPFNCSSGDFIFCCGTCGFRFCCTFKKRRLNQSTCTNYDTPLWLNTGKPPARKDDPLHDPTKDKTNLIVYIICGVVAVMVLVGIFTKLGLEKAHRPQREHMSRALADVMRPQGHCNTDHMERDLNIVVHVQHYENMDSRTPINNLHTTQMNNAVPTSPLLQQMGHPHSYPNLGQISNPYEQQPPGKELNKYASLKAVGNSDGDWAVATLKSPKADKVNDDFYAKRRHLAELAVKGNLPLHPVRVEDEPRAFSPEHGPAQQNGQKSRTNKMPPHPLAYNSTANFKTWDPSDQSLRRQAYGNKGKLGIAESGSCDPLGTRTQHFPPTQPYFITNSKTEVTV.

Residues 1–23 (MRRVLRLLLGCFLTELCARMCRA) form the signal peptide. The Extracellular segment spans residues 24–149 (QERSGHGQLA…DPLHDPTKDK (126 aa)). Residues N45, N89, and N116 are each glycosylated (N-linked (GlcNAc...) asparagine). A helical transmembrane segment spans residues 150-170 (TNLIVYIICGVVAVMVLVGIF). Residues 171–424 (TKLGLEKAHR…ITNSKTEVTV (254 aa)) are Cytoplasmic-facing. Disordered regions lie at residues 333–373 (PRAF…TWDP) and 389–424 (LGIA…EVTV). Polar residues-rich tracts occupy residues 362 to 373 (YNSTANFKTWDP) and 402 to 424 (TRTQ…EVTV).

It belongs to the shisa family. SHISA9 subfamily. In terms of assembly, component of some AMPA receptors (ionotropic glutamate receptors) complex, at least composed of some AMPA receptor (GRIA1, GRIA2 and/or GRIA3), CACNG2 and SHISA9, as well as low level of DLG4. In terms of tissue distribution, brain-specific. Mainly expressed in neurons, including in hippocampus, cerebral cortex, striatum, thalamus, olfactory bulb and cerebellum. Expressed in most brain structures during embryonic and postnatal development.

The protein localises to the cell projection. It localises to the dendritic spine membrane. Its subcellular location is the synapse. In terms of biological role, regulator of short-term neuronal synaptic plasticity in the dentate gyrus. Associates with AMPA receptors (ionotropic glutamate receptors) in synaptic spines and promotes AMPA receptor desensitization at excitatory synapses. This Mus musculus (Mouse) protein is Protein shisa-9 (Shisa9).